We begin with the raw amino-acid sequence, 757 residues long: MSGFDEGNVTVSGGGGKGGFKKNNGFVEDTSVRDLFKRFINEWKDQDNVFIYKEQLRQHYNLGWHYIEVSIDHLTDFNQELSGRFISSPNELMPSFEDAIKDIIKEMNYNKEQVDEDIQILFKSSANPEPIRYLRAGLISKLVKVQGIVISASRTQPKPSTMVVKCKNCQHTQTLHIRPGIVSSVLPQQCERGSNDAGKPCPNNPYVVLSDQSTFVNQQILKLQESPETIPTGEMPRHIILSLDKSLADKITPGTRIKVLGVLGIFEGGGKRREIAGGTIRTNYLRVLGITSDNAGRDSMHFTPSEEQSFKVFSRRQDLRNIIASSIAPSIYGHEDIKRAISCQLFGGSSKKLPDKMRLRGDINLLLLGDPGTAKSQLLKFVEKVAPISVYTSGKGSSAAGLTASVIREPSTGEYYLEGGAMVVADGGVVCIDEFDKMNVDDRVAIHEAMEQQTISIAKAGITTILNSRTSVLAAANPVYGRYNDAADDNINFQSTILSRFDLIFIVKDPKNEKRDFIISKHVINIHEKSSRSGGSGSVGNNTYDLSNTVVDDSHIGENEVTIQYLKKYIAYARSRISPRLSEDAVTTLKNHYVSVRAKSKEQEMINNGSYGGGGSKNSVETERKKRKNAIPITVRQLEAIIRISESLAKMSLSPIATNEHAKEAIRLFDISTFDAITTNNTVNETLTPERLENIRTAEKYLKDRVPIGSSIRIKDVRFQLSRSGLDHFTILKAVDILVGRDEFEFRNQKRTLFRKQ.

Residues 319–523 (LRNIIASSIA…KRDFIISKHV (205 aa)) form the MCM domain. The short motif at 499–502 (SRFD) is the Arginine finger element. The segment at 606–625 (INNGSYGGGGSKNSVETERK) is disordered.

It belongs to the MCM family. Component of the MCM2-7 complex. The complex forms a toroidal hexameric ring with the proposed subunit order MCM2-MCM6-MCM4-MCM7-MCM3-MCM5 (By simililarity).

Its subcellular location is the nucleus. It localises to the cytoplasm. The protein resides in the cytosol. It catalyses the reaction ATP + H2O = ADP + phosphate + H(+). Its function is as follows. Acts as a component of the MCM2-7 complex (MCM complex) which is the replicative helicase essential for 'once per cell cycle' DNA replication initiation and elongation in eukaryotic cells. Core component of CDC45-MCM-GINS (CMG) helicase, the molecular machine that unwinds template DNA during replication, and around which the replisome is built. The active ATPase sites in the MCM2-7 ring are formed through the interaction surfaces of two neighboring subunits such that a critical structure of a conserved arginine finger motif is provided in trans relative to the ATP-binding site of the Walker A box of the adjacent subunit. The six ATPase active sites, however, are likely to contribute differentially to the complex helicase activity. The protein is DNA replication licensing factor mcm5 (mcm5) of Dictyostelium discoideum (Social amoeba).